Reading from the N-terminus, the 131-residue chain is Small ribosomal subunit protein bS6 (131 aa).

Positions 98–131 are disordered; that stretch reads EASPMVKAKDERRERRDDFANETADDSDAGDSEE. Basic and acidic residues predominate over residues 104–116; the sequence is KAKDERRERRDDF. Residues 120–131 show a composition bias toward acidic residues; that stretch reads TADDSDAGDSEE.

The protein belongs to the bacterial ribosomal protein bS6 family.

Functionally, binds together with bS18 to 16S ribosomal RNA. This chain is Small ribosomal subunit protein bS6, found in Enterobacter sp. (strain 638).